We begin with the raw amino-acid sequence, 1135 residues long: Glutamate receptor ionotropic, NMDA 3A (1135 aa).

Residues 1–23 (MRRLSLWWLLSRVCLLLPPPCAL) form the signal peptide. The Extracellular segment spans residues 24–674 (VLAGVPSSSS…PIGAFMWPLH (651 aa)). The tract at residues 60 to 117 (TAPRAASRAQEGGRAGAQRDDPESGTWRPPAPSQGARWLGSALHGRGPPGSRKLGEGA) is disordered. N-linked (GlcNAc...) asparagine glycosylation is found at asparagine 145, asparagine 264, asparagine 275, asparagine 285, asparagine 296, asparagine 300, asparagine 426, asparagine 439, asparagine 549, and asparagine 565. Disulfide bonds link cysteine 537/cysteine 575 and cysteine 543/cysteine 576. Residues serine 631, serine 633, and arginine 638 each coordinate glycine. The D-serine site is built by serine 633 and arginine 638. The chain crosses the membrane as a helical span at residues 675 to 694 (WTMWLGIFVALHITAIFLTL). The Cytoplasmic segment spans residues 695-715 (YEWKSPFGMTPKGRNRNKVFS). Residues 716-727 (FSSALNVCYALL) constitute an intramembrane region (discontinuously helical). At 728-741 (FGRTAAIKPPKCWT) the chain is on the cytoplasmic side. The chain crosses the membrane as a helical span at residues 742 to 761 (GRFLMNLWAIFCMFCLSTYT). The Extracellular portion of the chain corresponds to 762 to 932 (ANLAAVMVGE…TLQMGIKHFS (171 aa)). Serine 801 lines the glycine pocket. 3 residues coordinate D-serine: serine 801, alanine 802, and aspartate 845. Aspartate 845 contacts glycine. Cysteines 859 and 913 form a disulfide. A glycan (N-linked (GlcNAc...) asparagine) is linked at asparagine 886. A helical membrane pass occupies residues 933-948 (GLFVLLCIGFGLSILT). Residues 949-1135 (TIGEHIVHRL…YQKTNRTCES (187 aa)) are Cytoplasmic-facing. The PPP2CB binding site stretch occupies residues 951-987 (GEHIVHRLLLPRIKNKSKLQYWLHTSQRFHRALNTSF). Positions 1080-1129 (TTNGKADSLNVTRSSVIQELSELEKQIQVIRQELQLAVSRKTELEEYQKT) form a coiled coil. The tract at residues 1082–1115 (NGKADSLNVTRSSVIQELSELEKQIQVIRQELQL) is GIT1-binding.

It belongs to the glutamate-gated ion channel (TC 1.A.10.1) family. NR3A/GRIN3A subfamily. Heterotetramer. Forms heterotetrameric channels composed of two GluN1/zeta subunits (GRIN1), and two identical GluN3 subunits (GRIN3A or GRIN3B) (in vitro). Can also form heterotetrameric channels that contain at least two GluN1 subunits and at least a combination of one GluN2 and one GluN3 subunits (in vitro). Does not form functional homomeric channels. Found in a complex with GRIN1, GRIN2A or GRIN2B and PPP2CB. Probably interacts with PPP2CB. No complex with PPP2CB is detected when NMDARs are stimulated by NMDA. Interacts (via C-terminus) with GIT1, but not with GRIA1/GluA1, nor with synaptophysin/SYP; this interaction competes with GIT1 interaction with ARHGEF7/beta-PIX. N-glycosylated. Isoform 1 and isoform 2 are expressed in olfactory bulb, frontal occipital, entorhinal and pyriform cortices, hippocampus, striatum, thalamus, cerebellum and spinal cord.

The protein localises to the cell membrane. It localises to the postsynaptic cell membrane. Its subcellular location is the postsynaptic density. It carries out the reaction Ca(2+)(in) = Ca(2+)(out). The enzyme catalyses Na(+)(in) = Na(+)(out). With respect to regulation, excitatory glycine receptors are inhibited by D-serine at a concentrion of 10uM. Component of a non-conventional N-methyl-D-aspartate (NMDA) receptors (NMDARs) that function as heterotetrameric, ligand-gated cation channels with low calcium permeability and low voltage-dependent block by Mg(2+). During the development of neural circuits, participates in the synaptic refinement period, restricting spine maturation and growth. Forms glutamatergic receptor complexes with GluN1 and GluN2 subunits which are activated by glycine binding to the GluN1 and GluN3 subunits and L-glutamate binding to GluN2 subunits. Forms excitatory glycinergic receptor complexes with GluN1 alone which are activated by glycine binding to the GluN1 and GluN3 subunits. GluN3A subunit also binds D-serine. Each GluN3 subunit confers differential attributes to channel properties, including activation, deactivation and desensitization kinetics, pH sensitivity, Ca2(+) permeability, and binding to allosteric modulators. By competing with GIT1 interaction with ARHGEF7/beta-PIX, may reduce GIT1/ARHGEF7-regulated local activation of RAC1, hence affecting signaling and limiting the maturation and growth of inactive synapses. The protein is Glutamate receptor ionotropic, NMDA 3A of Rattus norvegicus (Rat).